Consider the following 57-residue polypeptide: DNA-directed RNA polymerase subunit Rpo6 (57 aa).

This sequence belongs to the archaeal Rpo6/eukaryotic RPB6 RNA polymerase subunit family. As to quaternary structure, part of the RNA polymerase complex.

It localises to the cytoplasm. The catalysed reaction is RNA(n) + a ribonucleoside 5'-triphosphate = RNA(n+1) + diphosphate. In terms of biological role, DNA-dependent RNA polymerase (RNAP) catalyzes the transcription of DNA into RNA using the four ribonucleoside triphosphates as substrates. The protein is DNA-directed RNA polymerase subunit Rpo6 of Methanocaldococcus jannaschii (strain ATCC 43067 / DSM 2661 / JAL-1 / JCM 10045 / NBRC 100440) (Methanococcus jannaschii).